The following is a 435-amino-acid chain: Phospholipase A1 EG1, chloroplastic/mitochondrial (435 aa).

A chloroplast and mitochondrion-targeting transit peptide spans 1–31 (MTLPRQCAAACRTGGGGGGVVRCRAVAAAGG). The GXSXG signature appears at 264–268 (GHSMG). The active-site Acyl-ester intermediate is S266. Active-site charge relay system residues include D324 and H371.

The protein belongs to the AB hydrolase superfamily. Lipase family.

It localises to the mitochondrion. The protein localises to the plastid. It is found in the chloroplast. It catalyses the reaction a 1,2-diacyl-sn-glycero-3-phosphocholine + H2O = a 2-acyl-sn-glycero-3-phosphocholine + a fatty acid + H(+). Phospholipase that releases free fatty acids from phospholipids. Catalyzes the initial step of jasmonate (JA) biosynthesis. Required for the biosynthesis of endogenous JA in seedling, inflorescence and spikelets. Not essential for JA biosynthesis after wounding. Mediates spikelet development and specification of empty-glume identity. Functions in a high temperature-dependent manner to maintain floral developmental robustness under heat stress conditions. Functions by safeguarding the expression of several floral identity genes, such as MADS1, MADS6 and G1. This Oryza sativa subsp. indica (Rice) protein is Phospholipase A1 EG1, chloroplastic/mitochondrial.